The following is a 228-amino-acid chain: MIKGILFDLDDTLYNSSEFVEIARREAVKSMIDAGLNIDFEEAMNILNKIIKDKGSNYGKHFDDLVKAVLGKYDPKIITTGIITYHNVKVALLRPYPHTIKTLMELKAMGLKLGVITDGLTIKQWEKLIRLGIHPFFDDVITSEEFGLGKPHLEFFKYGLKRMGLKAEETVYVGDRVDKDIKPAKELGMITVRILKGKYKDMEDDEYSDYTINSLQELVDIVKNLKKD.

This sequence belongs to the HAD-like hydrolase superfamily. Mg(2+) serves as cofactor.

Functionally, catalyzes the dephosphorylation of D,L-glyceraldehyde 3-phosphate in vitro. This is Glyceraldehyde 3-phosphate phosphatase from Methanocaldococcus jannaschii (strain ATCC 43067 / DSM 2661 / JAL-1 / JCM 10045 / NBRC 100440) (Methanococcus jannaschii).